The following is a 902-amino-acid chain: DNA mismatch repair protein MutS (902 aa).

647–654 is a binding site for ATP; it reads GPNMGGKS.

Belongs to the DNA mismatch repair MutS family.

Functionally, this protein is involved in the repair of mismatches in DNA. It is possible that it carries out the mismatch recognition step. This protein has a weak ATPase activity. The protein is DNA mismatch repair protein MutS of Nitrosospira multiformis (strain ATCC 25196 / NCIMB 11849 / C 71).